We begin with the raw amino-acid sequence, 834 residues long: Protein Jade-1 (834 aa).

Residues 1 to 46 are disordered; it reads MKRGRLPSSSEDSDDNGSLSTTWSQHSRSQHGRSSTCSRPEDRKPS. Positions 24-35 are enriched in low complexity; the sequence is SQHSRSQHGRSS. Residues 61 to 81 are interaction with KAT7/HBO1 and histones; the sequence is DSYQLNPDDYYVLADPWRQEW. An interaction with histones region spans residues 81–189; the sequence is WEKGVQVPVS…EQRCYDNMNH (109 aa). Ser-90 bears the Phosphoserine mark. A Phosphothreonine modification is found at Thr-93. Lys-115 participates in a covalent cross-link: Glycyl lysine isopeptide (Lys-Gly) (interchain with G-Cter in SUMO2). The PHD-type 1 zinc-finger motif lies at 204–254; it reads DVVCDVCQSPDGEDGNEMVFCDKCNICVHQACYGILKVPEGSWLCRTCALG. The C2HC pre-PHD-type zinc-finger motif lies at 256–290; sequence QPKCLLCPKKGGAMKPTRSGTKWVHVSCALWIPEV. Residues 314–370 form a PHD-type 2 zinc finger; the sequence is LVCSLCNEKFGASIQCSVKNCRTAFHVTCAFDRGLEMKTILAENDEVKFKSYCPKHS. The segment at 367–409 is disordered; it reads PKHSSHRKPEEGLGEGAAQENGAPESSPQSPLEPYGSLEPNRE. A Glycyl lysine isopeptide (Lys-Gly) (interchain with G-Cter in SUMO2) cross-link involves residue Lys-573. 2 disordered regions span residues 589 to 621 and 676 to 716; these read HPLK…CGRR and DKSF…GTRK. Ser-603 bears the Phosphoserine mark. Lys-609 carries the post-translational modification N6-acetyllysine. Residues Ser-704 and Ser-735 each carry the phosphoserine modification. The tract at residues 738–819 is disordered; the sequence is KSWGGFRIPK…EKKCIHASST (82 aa). Basic and acidic residues-rich tracts occupy residues 747-768 and 777-790; these read KKGE…HSDC and PAKE…RADS.

The protein belongs to the JADE family. As to quaternary structure, component of the HBO1 complex composed at least of ING4 or ING5, KAT7/HBO1, MEAF6, and one of JADE1, JADE2 and JADE3. Interacts with NPHP4. In terms of tissue distribution, highly expressed in kidney. Also present in liver (at protein level).

It is found in the nucleus. The protein resides in the chromosome. The protein localises to the cytoplasm. It localises to the cytoskeleton. Its subcellular location is the cilium basal body. Scaffold subunit of some HBO1 complexes, which have a histone H4 acetyltransferase activity. Plays a key role in HBO1 complex by directing KAT7/HBO1 specificity towards histone H4 acetylation (H4K5ac, H4K8ac and H4K12ac), regulating DNA replication initiation, regulating DNA replication initiation. May also promote acetylation of nucleosomal histone H4 by KAT5. Promotes apoptosis. May act as a renal tumor suppressor. Negatively regulates canonical Wnt signaling; at least in part, cooperates with NPHP4 in this function. This is Protein Jade-1 (Jade1) from Mus musculus (Mouse).